The chain runs to 128 residues: Small ribosomal subunit protein bS6 (128 aa).

Residues 97–128 (TTPSPMMKEEKSRSLTAAPATDEAKPAEAESA) form a disordered region. Basic and acidic residues predominate over residues 118–128 (DEAKPAEAESA).

It belongs to the bacterial ribosomal protein bS6 family.

Its function is as follows. Binds together with bS18 to 16S ribosomal RNA. The sequence is that of Small ribosomal subunit protein bS6 from Aromatoleum aromaticum (strain DSM 19018 / LMG 30748 / EbN1) (Azoarcus sp. (strain EbN1)).